The chain runs to 100 residues: Urease subunit gamma (100 aa).

Belongs to the urease gamma subunit family. In terms of assembly, heterotrimer of UreA (gamma), UreB (beta) and UreC (alpha) subunits. Three heterotrimers associate to form the active enzyme.

It is found in the cytoplasm. The enzyme catalyses urea + 2 H2O + H(+) = hydrogencarbonate + 2 NH4(+). The protein operates within nitrogen metabolism; urea degradation; CO(2) and NH(3) from urea (urease route): step 1/1. This Prochlorococcus marinus (strain NATL1A) protein is Urease subunit gamma.